A 134-amino-acid chain; its full sequence is Rubredoxin-2 (134 aa).

The Rubredoxin-like domain maps to 1-53; that stretch reads MAKYQCPDCQYIYDECKGEPHEGFQPNTNWGEIPEEWACPDCAVRDKIDFKML. 4 residues coordinate Fe cation: Cys-6, Cys-9, Cys-39, and Cys-42. A compositionally biased stretch (basic and acidic residues) spans 99-116; the sequence is SITDERENTPDNKVERRS. A disordered region spans residues 99-134; the sequence is SITDERENTPDNKVERRSQSQAVRRSSVKKIKNNKR. Positions 124–134 are enriched in basic residues; the sequence is SSVKKIKNNKR.

This sequence belongs to the rubredoxin family. Fe(3+) serves as cofactor.

It is found in the cytoplasm. Its pathway is hydrocarbon metabolism; alkane degradation. Functionally, involved in the hydrocarbon hydroxylating system, which transfers electrons from NADH to rubredoxin reductase and then through rubredoxin to alkane 1 monooxygenase. The protein is Rubredoxin-2 (alkF) of Pseudomonas putida (Arthrobacter siderocapsulatus).